The chain runs to 210 residues: Imidazoleglycerol-phosphate dehydratase (210 aa).

It belongs to the imidazoleglycerol-phosphate dehydratase family.

The protein localises to the cytoplasm. It carries out the reaction D-erythro-1-(imidazol-4-yl)glycerol 3-phosphate = 3-(imidazol-4-yl)-2-oxopropyl phosphate + H2O. Its pathway is amino-acid biosynthesis; L-histidine biosynthesis; L-histidine from 5-phospho-alpha-D-ribose 1-diphosphate: step 6/9. This Acidovorax ebreus (strain TPSY) (Diaphorobacter sp. (strain TPSY)) protein is Imidazoleglycerol-phosphate dehydratase.